The chain runs to 341 residues: S-adenosylmethionine:tRNA ribosyltransferase-isomerase (341 aa).

The protein belongs to the QueA family. In terms of assembly, monomer.

It localises to the cytoplasm. The catalysed reaction is 7-aminomethyl-7-carbaguanosine(34) in tRNA + S-adenosyl-L-methionine = epoxyqueuosine(34) in tRNA + adenine + L-methionine + 2 H(+). It participates in tRNA modification; tRNA-queuosine biosynthesis. Transfers and isomerizes the ribose moiety from AdoMet to the 7-aminomethyl group of 7-deazaguanine (preQ1-tRNA) to give epoxyqueuosine (oQ-tRNA). The protein is S-adenosylmethionine:tRNA ribosyltransferase-isomerase of Pelotomaculum thermopropionicum (strain DSM 13744 / JCM 10971 / SI).